A 677-amino-acid chain; its full sequence is Penicillin-binding protein activator LpoA (677 aa).

An N-terminal signal peptide occupies residues 1–26 (MLPSKIVRHKAGRFVPVLLAGLILAA). Cysteine 27 carries N-palmitoyl cysteine lipidation. Cysteine 27 carries S-diacylglycerol cysteine lipidation. Residues 309-359 (QPADANAVVSPSANPAAAQQSGTAQQPATTQQQPQQQPAAEPASNAQVKVY) are disordered. Residues 313–355 (ANAVVSPSANPAAAQQSGTAQQPATTQQQPQQQPAAEPASNAQ) show a composition bias toward low complexity.

Belongs to the LpoA family. As to quaternary structure, interacts with PBP1a.

The protein resides in the cell outer membrane. Its function is as follows. Regulator of peptidoglycan synthesis that is essential for the function of penicillin-binding protein 1A (PBP1a). This is Penicillin-binding protein activator LpoA from Pantoea ananatis (strain LMG 20103).